The primary structure comprises 224 residues: Haloacetate dehalogenase H-2 (224 aa).

Asp10 functions as the Nucleophile in the catalytic mechanism.

It belongs to the HAD-like hydrolase superfamily. S-2-haloalkanoic acid dehalogenase family.

It carries out the reaction a haloacetate + H2O = a halide anion + glycolate + H(+). The chain is Haloacetate dehalogenase H-2 (dehH2) from Moraxella sp. (strain B).